Here is a 710-residue protein sequence, read N- to C-terminus: Polyribonucleotide nucleotidyltransferase (710 aa).

Residues Asp489 and Asp495 each contribute to the Mg(2+) site. Positions 556-615 constitute a KH domain; sequence PKIDTIKIDVDKIKVVIGKGGETIDKIIAETGVKIDIDDEGNVSIYSSDQAAIDRTKEII. The region spanning 625–693 is the S1 motif domain; it reads GEVYHAKVIR…EKGRVDASMK (69 aa). Residues 691–710 form a disordered region; sequence SMKALIPRPPKPEKKEEKHD. The span at 700–710 shows a compositional bias: basic and acidic residues; sequence PKPEKKEEKHD.

This sequence belongs to the polyribonucleotide nucleotidyltransferase family. Mg(2+) is required as a cofactor.

The protein resides in the cytoplasm. It catalyses the reaction RNA(n+1) + phosphate = RNA(n) + a ribonucleoside 5'-diphosphate. In terms of biological role, involved in mRNA degradation. Catalyzes the phosphorolysis of single-stranded polyribonucleotides processively in the 3'- to 5'-direction. In Streptococcus pyogenes serotype M18 (strain MGAS8232), this protein is Polyribonucleotide nucleotidyltransferase.